The sequence spans 473 residues: MSKPVITRFAPSPTGYLHIGGARTALFNWLYAKHCGGKMLLRIEDTDRERSTEAATAAILDGLTWLGLDWDGEAISQFERAPRHREVAEELVANGKAYYCYASPEELEEMREKARAEGRPPRYDGRWRDRDPSEAPAGVKPVIRIKAPRDGETVVHDAVQGDVRFPNKDLDDFIILRSDGTPTYMHAVVVDDHDMGVTHIIRGDDHLTNAARQTIIYNAMGWDVPQMSHIPLIHGADGAKLSKRHGALGVDAYRAIGYLPAALRNYLVRLGWSHGDDEIMSTEQMIEWFDVKDINKGAARFDFQKLEAINGLYMRSSDDQALFDALVAVLPEIEGGKELAEALDDKGRAQLLLAMPGLKERAKTLVELADGAKFIFASRPLALDEKAASLLNDEGRAVLKPVYPVLEAMGEWTAESLDAAIRAHAEAEGLKLGKIAQPLRAALTGRATSPGVFDVLVVLGREESLARIGDQIG.

Residues P11–G21 carry the 'HIGH' region motif. Positions K113–S133 are enriched in basic and acidic residues. The interval K113–P136 is disordered. A 'KMSKS' region motif is present at residues K240–R244. K243 is an ATP binding site.

It belongs to the class-I aminoacyl-tRNA synthetase family. Glutamate--tRNA ligase type 1 subfamily. In terms of assembly, monomer.

The protein localises to the cytoplasm. It catalyses the reaction tRNA(Glu) + L-glutamate + ATP = L-glutamyl-tRNA(Glu) + AMP + diphosphate. In terms of biological role, catalyzes the attachment of glutamate to tRNA(Glu) in a two-step reaction: glutamate is first activated by ATP to form Glu-AMP and then transferred to the acceptor end of tRNA(Glu). The sequence is that of Glutamate--tRNA ligase 1 from Brucella melitensis biotype 1 (strain ATCC 23456 / CCUG 17765 / NCTC 10094 / 16M).